The primary structure comprises 270 residues: Replication protein A 32 kDa subunit (270 aa).

At Met-1 the chain carries N-acetylmethionine. 2 positions are modified to phosphoserine; by PRKDC: Ser-4 and Ser-8. The residue at position 21 (Thr-21) is a Phosphothreonine; by PRKDC. Positions 21–40 (TQSPGGFGSPAPSQAEKKSR) are disordered. Ser-23 carries the phosphoserine; by CDK2 modification. Ser-29 carries the phosphoserine; by CDK1 modification. At Ser-33 the chain carries Phosphoserine; by PRKDC. Residues Lys-37 and Lys-38 each participate in a glycyl lysine isopeptide (Lys-Gly) (interchain with G-Cter in ubiquitin) cross-link. The OB DNA-binding region spans 74-148 (VTIVGIIRHA…KSLVAFKIMP (75 aa)). An interaction with RAD52, TIPIN, UNG and XPA region spans residues 187 to 270 (GMSEAGNFGG…DDHFKSTDAE (84 aa)).

This sequence belongs to the replication factor A protein 2 family. As to quaternary structure, component of the replication protein A complex (RPA/RP-A), a heterotrimeric complex composed of RPA1, RPA2 and RPA3. Interacts with PRPF19; the PRP19-CDC5L complex is recruited to the sites of DNA repair where it ubiquitinates the replication protein A complex (RPA). Interacts with SERTAD3. Interacts with TIPIN. Interacts with TIMELESS. Interacts with PPP4R2; the interaction is direct, DNA damage-dependent and mediates the recruitment of the PP4 catalytic subunit PPP4C. Interacts (hyperphosphorylated) with RAD51. Interacts with SMARCAL1; the interaction is direct and mediates the recruitment to the RPA complex of SMARCAL1. Interacts with RAD52 and XPA; those interactions are direct and associate RAD52 and XPA to the RPA complex. Interacts with FBH1. Interacts with ETAA1; the interaction is direct and promotes ETAA1 recruitment at stalled replication forks. Interacts with DDI2. Interacts (in unphosphorylated form via N-terminus) with EIF4EBP3; the interaction enhances EIF4EBP3-mediated inhibition of EIF4E-mediated mRNA nuclear export. Post-translationally, differentially phosphorylated throughout the cell cycle, becoming phosphorylated at the G1-S transition and dephosphorylated in late mitosis. Mainly phosphorylated at Ser-23 and Ser-29, by cyclin A-CDK2 and cyclin B-CDK1, respectively during DNA replication and mitosis. Dephosphorylation may require the serine/threonine-protein phosphatase 4. Phosphorylation at Ser-23 and Ser-29 is a prerequisite for further phosphorylation. Becomes hyperphosphorylated on additional residues including Ser-4, Ser-8, Thr-21 and Ser-33 in response to DNA damage. Hyperphosphorylation is mediated by ATM, ATR and PRKDC. Primarily recruited to DNA repair nuclear foci as a hypophosphorylated form it undergoes subsequent hyperphosphorylation, catalyzed by ATR. Hyperphosphorylation is required for RAD51 recruitment to chromatin and efficient DNA repair. Phosphorylation at Thr-21 depends upon RFWD3 presence. DNA damage-induced 'Lys-63'-linked polyubiquitination by PRPF19 mediates ATRIP recruitment to the RPA complex at sites of DNA damage and activation of ATR. Ubiquitinated by RFWD3 at stalled replication forks in response to DNA damage: ubiquitination by RFWD3 does not lead to degradation by the proteasome and promotes removal of the RPA complex from stalled replication forks, promoting homologous recombination.

It localises to the nucleus. The protein resides in the PML body. Functionally, as part of the heterotrimeric replication protein A complex (RPA/RP-A), binds and stabilizes single-stranded DNA intermediates, that form during DNA replication or upon DNA stress. It prevents their reannealing and in parallel, recruits and activates different proteins and complexes involved in DNA metabolism. Thereby, it plays an essential role both in DNA replication and the cellular response to DNA damage. In the cellular response to DNA damage, the RPA complex controls DNA repair and DNA damage checkpoint activation. Through recruitment of ATRIP activates the ATR kinase a master regulator of the DNA damage response. It is required for the recruitment of the DNA double-strand break repair factors RAD51 and RAD52 to chromatin in response to DNA damage. Also recruits to sites of DNA damage proteins like XPA and XPG that are involved in nucleotide excision repair and is required for this mechanism of DNA repair. Also plays a role in base excision repair (BER) probably through interaction with UNG. Also recruits SMARCAL1/HARP, which is involved in replication fork restart, to sites of DNA damage. May also play a role in telomere maintenance. The polypeptide is Replication protein A 32 kDa subunit (RPA2) (Pongo abelii (Sumatran orangutan)).